The primary structure comprises 98 residues: NADH-ubiquinone oxidoreductase chain 4L (98 aa).

3 helical membrane-spanning segments follow: residues 1-21, 29-49, and 61-81; these read MTMV…GLLM, SLLC…VTIL, and IILL…LVMV.

This sequence belongs to the complex I subunit 4L family. In terms of assembly, core subunit of respiratory chain NADH dehydrogenase (Complex I) which is composed of 45 different subunits.

It is found in the mitochondrion inner membrane. It carries out the reaction a ubiquinone + NADH + 5 H(+)(in) = a ubiquinol + NAD(+) + 4 H(+)(out). Functionally, core subunit of the mitochondrial membrane respiratory chain NADH dehydrogenase (Complex I) which catalyzes electron transfer from NADH through the respiratory chain, using ubiquinone as an electron acceptor. Part of the enzyme membrane arm which is embedded in the lipid bilayer and involved in proton translocation. This Leptonychotes weddellii (Weddell seal) protein is NADH-ubiquinone oxidoreductase chain 4L (MT-ND4L).